A 1070-amino-acid chain; its full sequence is DNA-directed RNA polymerase subunit beta (1070 aa).

The protein belongs to the RNA polymerase beta chain family. As to quaternary structure, in plastids the minimal PEP RNA polymerase catalytic core is composed of four subunits: alpha, beta, beta', and beta''. When a (nuclear-encoded) sigma factor is associated with the core the holoenzyme is formed, which can initiate transcription.

It localises to the plastid. It is found in the chloroplast. It catalyses the reaction RNA(n) + a ribonucleoside 5'-triphosphate = RNA(n+1) + diphosphate. In terms of biological role, DNA-dependent RNA polymerase catalyzes the transcription of DNA into RNA using the four ribonucleoside triphosphates as substrates. The sequence is that of DNA-directed RNA polymerase subunit beta from Daucus carota (Wild carrot).